A 407-amino-acid polypeptide reads, in one-letter code: S-adenosylmethionine synthase (407 aa).

His-19 contacts ATP. Position 21 (Asp-21) interacts with Mg(2+). Residue Glu-47 participates in K(+) binding. Glu-60 and Gln-103 together coordinate L-methionine. The interval 103–113 (QSQEIADGVDT) is flexible loop. A disordered region spans residues 108 to 131 (ADGVDTSQEARGDGHFEEDDRAGA). ATP is bound by residues 178-180 (DGK), Asp-258, 264-265 (RK), Ala-281, and Lys-285. Asp-258 is a binding site for L-methionine. L-methionine is bound at residue Lys-289.

The protein belongs to the AdoMet synthase family. In terms of assembly, homotetramer; dimer of dimers. Requires Mg(2+) as cofactor. K(+) serves as cofactor.

Its subcellular location is the cytoplasm. It carries out the reaction L-methionine + ATP + H2O = S-adenosyl-L-methionine + phosphate + diphosphate. It participates in amino-acid biosynthesis; S-adenosyl-L-methionine biosynthesis; S-adenosyl-L-methionine from L-methionine: step 1/1. In terms of biological role, catalyzes the formation of S-adenosylmethionine (AdoMet) from methionine and ATP. The overall synthetic reaction is composed of two sequential steps, AdoMet formation and the subsequent tripolyphosphate hydrolysis which occurs prior to release of AdoMet from the enzyme. This is S-adenosylmethionine synthase from Corynebacterium efficiens (strain DSM 44549 / YS-314 / AJ 12310 / JCM 11189 / NBRC 100395).